The chain runs to 757 residues: Catalase-peroxidase (757 aa).

A disordered region spans residues 1 to 28 (MENQSNDISKCPFHNGSMDNQAASGTKN). Residues 17–28 (SMDNQAASGTKN) are compositionally biased toward polar residues. Positions 100-247 (WHSAGTYRVH…LAAVQMGLIY (148 aa)) form a cross-link, tryptophyl-tyrosyl-methioninium (Trp-Tyr) (with M-273). Histidine 101 serves as the catalytic Proton acceptor. The segment at residues 247–273 (YVNPEGPDGNPDPILAAKDIRDTFGRM) is a cross-link (tryptophyl-tyrosyl-methioninium (Tyr-Met) (with W-100)). Heme b is bound at residue histidine 288.

The protein belongs to the peroxidase family. Peroxidase/catalase subfamily. As to quaternary structure, homodimer or homotetramer. It depends on heme b as a cofactor. Formation of the three residue Trp-Tyr-Met cross-link is important for the catalase, but not the peroxidase activity of the enzyme.

It catalyses the reaction H2O2 + AH2 = A + 2 H2O. The catalysed reaction is 2 H2O2 = O2 + 2 H2O. Functionally, bifunctional enzyme with both catalase and broad-spectrum peroxidase activity. The polypeptide is Catalase-peroxidase (Flavobacterium johnsoniae (strain ATCC 17061 / DSM 2064 / JCM 8514 / BCRC 14874 / CCUG 350202 / NBRC 14942 / NCIMB 11054 / UW101) (Cytophaga johnsonae)).